The following is a 209-amino-acid chain: CASP-like protein 2A2 (209 aa).

The Cytoplasmic segment spans residues methionine 1–proline 37. Residues isoleucine 38–leucine 58 traverse the membrane as a helical segment. Over arginine 59–tyrosine 79 the chain is Extracellular. A helical membrane pass occupies residues leucine 80–valine 100. The Cytoplasmic segment spans residues proline 101–serine 109. The helical transmembrane segment at tryptophan 110–alanine 130 threads the bilayer. Topologically, residues alanine 131–arginine 161 are extracellular. The chain crosses the membrane as a helical span at residues isoleucine 162–serine 182. Topologically, residues tyrosine 183–arginine 209 are cytoplasmic.

It belongs to the Casparian strip membrane proteins (CASP) family. Homodimer and heterodimers.

It is found in the cell membrane. The polypeptide is CASP-like protein 2A2 (Zea mays (Maize)).